The following is a 24-amino-acid chain: Frenatin-4 (24 aa).

Expressed by the skin glands.

It localises to the secreted. Functionally, very weak antimicrobial peptide since it does not show activity below 100 ug/ml against Bacillus cereus, Escherichia coli, Leuconostoc mesenteroides, Micrococcus luteus, Pastewella haemolytica, Staphylococcus aureus, Streptococcus faecalis and Streptococcus uberis. This Nyctimystes infrafrenatus (White-lipped tree frog) protein is Frenatin-4.